The chain runs to 144 residues: Large ribosomal subunit protein uL16 (144 aa).

This sequence belongs to the universal ribosomal protein uL16 family. In terms of assembly, part of the 50S ribosomal subunit.

Binds 23S rRNA and is also seen to make contacts with the A and possibly P site tRNAs. This Bacillus pumilus (strain SAFR-032) protein is Large ribosomal subunit protein uL16.